A 239-amino-acid polypeptide reads, in one-letter code: Isoprenyl transferase (239 aa).

Residue aspartate 16 is part of the active site. Aspartate 16 is a Mg(2+) binding site. Substrate is bound by residues glycine 17–arginine 20, tryptophan 21, arginine 29, histidine 33, and serine 61–glutamate 63. Catalysis depends on asparagine 64, which acts as the Proton acceptor. Substrate is bound by residues tryptophan 65, arginine 67, arginine 187, and arginine 193 to serine 195. Glutamate 206 serves as a coordination point for Mg(2+).

It belongs to the UPP synthase family. As to quaternary structure, homodimer. Requires Mg(2+) as cofactor.

Catalyzes the condensation of isopentenyl diphosphate (IPP) with allylic pyrophosphates generating different type of terpenoids. This Lactobacillus johnsonii (strain CNCM I-12250 / La1 / NCC 533) protein is Isoprenyl transferase.